The following is a 192-amino-acid chain: Ion-translocating oxidoreductase complex subunit A (192 aa).

A run of 6 helical transmembrane segments spans residues 5–25 (ILLLIGTVLVNNFVLVKFLGL), 39–59 (IGMGLATTFVLTMASVCAYLV), 72–92 (LRTMSFILVIAVVVQFTEMVV), 102–122 (LLGIFLPLITTNCAVLGVALL), 134–154 (IIYGFGAAVGFSLVLILFASM), and 171–191 (SIAMITAGLMSLAFMGFTGLV).

This sequence belongs to the NqrDE/RnfAE family. As to quaternary structure, the complex is composed of six subunits: RnfA, RnfB, RnfC, RnfD, RnfE and RnfG.

The protein localises to the cell inner membrane. Part of a membrane-bound complex that couples electron transfer with translocation of ions across the membrane. This Vibrio vulnificus (strain CMCP6) protein is Ion-translocating oxidoreductase complex subunit A.